The chain runs to 293 residues: 33 kDa chaperonin (293 aa).

Intrachain disulfides connect C235/C237 and C267/C270.

This sequence belongs to the HSP33 family. Under oxidizing conditions two disulfide bonds are formed involving the reactive cysteines. Under reducing conditions zinc is bound to the reactive cysteines and the protein is inactive.

The protein resides in the cytoplasm. Its function is as follows. Redox regulated molecular chaperone. Protects both thermally unfolding and oxidatively damaged proteins from irreversible aggregation. Plays an important role in the bacterial defense system toward oxidative stress. In Deinococcus radiodurans (strain ATCC 13939 / DSM 20539 / JCM 16871 / CCUG 27074 / LMG 4051 / NBRC 15346 / NCIMB 9279 / VKM B-1422 / R1), this protein is 33 kDa chaperonin.